The following is a 136-amino-acid chain: Transmembrane protein 203 (136 aa).

4 helical membrane passes run 14-34, 50-72, 81-101, and 112-132; these read FAQL…VLLA, FIPF…VRLF, VLRL…EMLL, and LWFG…MIRA.

The protein resides in the endoplasmic reticulum membrane. It localises to the endoplasmic reticulum-Golgi intermediate compartment. In terms of biological role, involved in the regulation of cellular calcium homeotasis. May act as a regulator of STING-mediated inflammatory signaling in macrophages. This is Transmembrane protein 203 (tmem203) from Xenopus tropicalis (Western clawed frog).